The primary structure comprises 318 residues: MVPTPITVRVPAKVNLHLSVGDTREDGYHELVTVFQALSMTDEVTVHIADEPGIEVRGEGADSVPTGPSNLAWKAVRALAERCGRDPDEPGVRVSINKGIPVAGGMAGGSADAAAALLALNHLWRLEMGRDELAGIAADIGSDVPFALQGGTALGTGRGEQLIPVLARHTFHWVIALDRRGLETPGVFSELDRLREESRPNRVGEVEPVLEALASGDPRQLALLLGNDLQAAAVSLRPGLRRTLRAGVQAGALAGIVSGSGPTCAFLCTDADAAVRVAAELSGAGVCRTVRVAQGPVPGARLVTDDRADRPTPPQVHA.

K13 is a catalytic residue. ATP is bound at residue 101-111; the sequence is PVAGGMAGGSA. D143 is an active-site residue. The disordered stretch occupies residues 298 to 318; it reads PGARLVTDDRADRPTPPQVHA.

Belongs to the GHMP kinase family. IspE subfamily.

It catalyses the reaction 4-CDP-2-C-methyl-D-erythritol + ATP = 4-CDP-2-C-methyl-D-erythritol 2-phosphate + ADP + H(+). It participates in isoprenoid biosynthesis; isopentenyl diphosphate biosynthesis via DXP pathway; isopentenyl diphosphate from 1-deoxy-D-xylulose 5-phosphate: step 3/6. In terms of biological role, catalyzes the phosphorylation of the position 2 hydroxy group of 4-diphosphocytidyl-2C-methyl-D-erythritol. This Saccharopolyspora erythraea (strain ATCC 11635 / DSM 40517 / JCM 4748 / NBRC 13426 / NCIMB 8594 / NRRL 2338) protein is 4-diphosphocytidyl-2-C-methyl-D-erythritol kinase.